A 168-amino-acid polypeptide reads, in one-letter code: Pathogenesis-related protein 1B (168 aa).

Residues 1–30 (MGFFLFSQMPSFFLVSTLLLFLIISHSSHA) form the signal peptide. The SCP domain occupies 38–156 (LDAHNTARAD…NGGYVVSCNY (119 aa)).

The protein belongs to the CRISP family. Three disulfide bonds are present.

It is found in the vacuole. Its function is as follows. Probably involved in the defense reaction of plants against pathogens. In Nicotiana tabacum (Common tobacco), this protein is Pathogenesis-related protein 1B.